A 159-amino-acid chain; its full sequence is Transcriptional repressor NrdR (159 aa).

The disordered stretch occupies residues 1 to 21 (MRCPKCQHNKSNVIDSRQAED). A zinc finger lies at 3-34 (CPKCQHNKSNVIDSRQAEDGNTIRRRRECDAC). An ATP-cone domain is found at 49–139 (LLVVKKDGTR…VYRSFKDVDE (91 aa)).

The protein belongs to the NrdR family. Zn(2+) is required as a cofactor.

Functionally, negatively regulates transcription of bacterial ribonucleotide reductase nrd genes and operons by binding to NrdR-boxes. The protein is Transcriptional repressor NrdR of Streptococcus thermophilus (strain ATCC BAA-491 / LMD-9).